A 384-amino-acid polypeptide reads, in one-letter code: Chaperone protein DnaJ (384 aa).

The J domain maps to 4–68 (DFYEILGVSR…EKRQMYDQMG (65 aa)). Disordered regions lie at residues 29 to 60 (REYH…DEEK) and 73 to 131 (EQAE…GQDL). The span at 42 to 60 (EEKFKQAKKAKEVLTDEEK) shows a compositional bias: basic and acidic residues. The segment covering 80–101 (GAGGGGGRGGMGGDPFGGGAGG) has biased composition (gly residues). A compositionally biased stretch (low complexity) spans 102 to 111 (FDMQDIFDQF). Positions 112-121 (FGGGGRGGRG) are enriched in gly residues. The segment at 145 to 227 (GATKQLNVTR…CRGNGVVQND (83 aa)) adopts a CR-type zinc-finger fold. Zn(2+) contacts are provided by Cys158, Cys161, Cys175, and Cys178. 4 CXXCXGXG motif repeats span residues 158 to 165 (CDDCDGAG), 175 to 182 (CPECNGQG), 201 to 208 (CRRCDGEG), and 215 to 222 (CSTCRGNG). The disordered stretch occupies residues 160–191 (DCDGAGHPPGADSETCPECNGQGQTTQVQQTP). Residues 180–190 (GQGQTTQVQQT) are compositionally biased toward low complexity. The Zn(2+) site is built by Cys201, Cys204, Cys215, and Cys218.

The protein belongs to the DnaJ family. As to quaternary structure, homodimer. The cofactor is Zn(2+).

Its subcellular location is the cytoplasm. Its function is as follows. Participates actively in the response to hyperosmotic and heat shock by preventing the aggregation of stress-denatured proteins and by disaggregating proteins, also in an autonomous, DnaK-independent fashion. Unfolded proteins bind initially to DnaJ; upon interaction with the DnaJ-bound protein, DnaK hydrolyzes its bound ATP, resulting in the formation of a stable complex. GrpE releases ADP from DnaK; ATP binding to DnaK triggers the release of the substrate protein, thus completing the reaction cycle. Several rounds of ATP-dependent interactions between DnaJ, DnaK and GrpE are required for fully efficient folding. Also involved, together with DnaK and GrpE, in the DNA replication of plasmids through activation of initiation proteins. In Haloarcula marismortui (strain ATCC 43049 / DSM 3752 / JCM 8966 / VKM B-1809) (Halobacterium marismortui), this protein is Chaperone protein DnaJ.